The chain runs to 293 residues: Ribosomal protein L11 methyltransferase (293 aa).

Positions 145, 166, 188, and 230 each coordinate S-adenosyl-L-methionine.

It belongs to the methyltransferase superfamily. PrmA family.

The protein resides in the cytoplasm. It catalyses the reaction L-lysyl-[protein] + 3 S-adenosyl-L-methionine = N(6),N(6),N(6)-trimethyl-L-lysyl-[protein] + 3 S-adenosyl-L-homocysteine + 3 H(+). Functionally, methylates ribosomal protein L11. The polypeptide is Ribosomal protein L11 methyltransferase (Actinobacillus pleuropneumoniae serotype 7 (strain AP76)).